The primary structure comprises 329 residues: MPAVQMTGVGGAVPAQVLTNYHLSELVTTSDEWIASRTGIRSRRILAPGQSLTQLAARAATDALSQAGRSPLDVDLLILATSTPDDLFGGAAHLQHEIGAVRAVAFDLTAACSGFVFALATASQFVRTGTYRTVLVVGADALSRYTDWTDRATCVLFGDGAGAALLEAGEVEGILGFELRTDGARAGHLNIHCTAEAVPLAADMAATRARFASITMNGREVYRFAVEAVPDLIEKTLAACGVAPEQVKAYLLHQANQRILDSVASRLHVAPERMASNLADYGNTSSASVPLILQEWVQDGRIRAGDRVVLAGFGAGLSWGVLLARWGRL.

Catalysis depends on residues C112 and H253. Residues 254–258 (QANQR) are ACP-binding. N283 is an active-site residue.

This sequence belongs to the thiolase-like superfamily. FabH family. In terms of assembly, homodimer.

The protein resides in the cytoplasm. The catalysed reaction is malonyl-[ACP] + acetyl-CoA + H(+) = 3-oxobutanoyl-[ACP] + CO2 + CoA. Its pathway is lipid metabolism; fatty acid biosynthesis. In terms of biological role, catalyzes the condensation reaction of fatty acid synthesis by the addition to an acyl acceptor of two carbons from malonyl-ACP. Catalyzes the first condensation reaction which initiates fatty acid synthesis and may therefore play a role in governing the total rate of fatty acid production. Possesses both acetoacetyl-ACP synthase and acetyl transacylase activities. Its substrate specificity determines the biosynthesis of branched-chain and/or straight-chain of fatty acids. In Gloeobacter violaceus (strain ATCC 29082 / PCC 7421), this protein is Beta-ketoacyl-[acyl-carrier-protein] synthase III.